The following is a 620-amino-acid chain: Protein VERNALIZATION INSENSITIVE 3 (620 aa).

Residues 148–206 form a PHD-type zinc finger; it reads RCSCCICQKFDDNKDPSLWLTCDACGSSCHLECGLKQDRYGIGSDDLDGRFYCAYCGKD. The short motif at 213–220 is the Nuclear localization signal element; it reads WRKQVKVA. Positions 314–412 constitute a Fibronectin type-III domain; the sequence is DKMTVRVEEI…ELRFTTLKDD (99 aa). The disordered stretch occupies residues 411–466; it reads DDGDEAGDQQSPLTNSSSGLCSNPSLPEDESNNVNKSCSKGNGDKDNTEHCSAGEV. Polar residues predominate over residues 418 to 435; sequence DQQSPLTNSSSGLCSNPS. A Nuclear localization signal motif is present at residues 493 to 500; the sequence is CKRDIYKG. The segment at 512-620 is VIN3-Interacting Domain (VID); that stretch reads TVSLNEKPEI…PAGICLKLWH (109 aa).

Interacts with VIL1 and VIL2. The heterodimer made of VIN3 and VIL1 is required for establishing the vernalization-induced epigenetic silencing of FLC. Component of the plant homeodomain / polycomb repressive complex 2 (PHD-PRC2) large complex during prolonged cold, composed of core PRC2 components (VRN2, EZA1, FIE and MSI1), and three related PHD finger proteins (VIL1, VIL2 and VIN3) that mediates histone H3 trimethylation on 'Lys-27' (H3K27me3). As to expression, expressed in shoot and root apices. Displays the same pattern of expression as FLC.

It localises to the nucleus. The protein resides in the nucleus speckle. Its function is as follows. Plays a central role in vernalization by mediating the initial transcriptional repression of the homeotic gene FLC, a floral repressor, after a cold treatment. However, due to its transient expression, it cannot maintain repression of FLC, which is then maintained by Polycomb Group complexes containing VRN2 throughout development. Required to deacetylate histones on the FLC promoter. Together with VIL1, required during vernalization for the modifications of FLC and FLM chromatin that are associated with an epigenetically silenced state (e.g. chromatin modifications, histone deacetylation, and trimethylated H3 'Lys-4' H3K4me3 and 'Lys-27' H3K27me3) and with acquisition of competence to flower. The protein is Protein VERNALIZATION INSENSITIVE 3 (VIN3) of Arabidopsis thaliana (Mouse-ear cress).